A 679-amino-acid polypeptide reads, in one-letter code: Kelch-like protein diablo (679 aa).

Over residues 1 to 48 (MGDLPGGGGGAAGGAGAAGGGGGGGNGAAGSSSSGGGASGSGGGGPGS) the composition is skewed to gly residues. Positions 1 to 84 (MGDLPGGGGG…RLSHTSEKHP (84 aa)) are disordered. A BTB domain is found at 101 to 168 (CDVVLNVGGR…CYTAHIIVEE (68 aa)). The BACK domain occupies 203 to 305 (CLGIRAFADT…SPKFLVGTVG (103 aa)). 6 Kelch repeats span residues 352 to 398 (VLFA…VLND), 400 to 446 (LYAV…VLDG), 447 to 493 (FLYA…VLGG), 495 to 540 (LYAI…VFNN), 542 to 587 (IYAV…VVNG), and 588 to 634 (QLYA…VMRA). The tract at residues 643–679 (CDNNSSNNNNNNYNLKHQQQQPQQQQQQQQQQTQQQL) is disordered. A compositionally biased stretch (low complexity) spans 645-679 (NNSSNNNNNNYNLKHQQQQPQQQQQQQQQQTQQQL).

Its pathway is protein modification; protein ubiquitination. Probable substrate-specific adapter of an E3 ubiquitin-protein ligase complex which mediates the ubiquitination and subsequent proteasomal degradation of target proteins. May have a role in synapse differentiation and growth. The sequence is that of Kelch-like protein diablo from Drosophila willistoni (Fruit fly).